The sequence spans 157 residues: Transcriptional repressor NrdR (157 aa).

The disordered stretch occupies residues 1–26 (MRCPKCGGSKSSVIDSRQAEDGNTIR). A zinc finger spans residues 3–34 (CPKCGGSKSSVIDSRQAEDGNTIRRRRECEDC). The segment covering 17–26 (RQAEDGNTIR) has biased composition (basic and acidic residues). In terms of domain architecture, ATP-cone spans 49–139 (LVVVKKDGTR…VYRSFKDVGE (91 aa)).

It belongs to the NrdR family. The cofactor is Zn(2+).

Its function is as follows. Negatively regulates transcription of bacterial ribonucleotide reductase nrd genes and operons by binding to NrdR-boxes. The sequence is that of Transcriptional repressor NrdR from Streptococcus gordonii (strain Challis / ATCC 35105 / BCRC 15272 / CH1 / DL1 / V288).